We begin with the raw amino-acid sequence, 699 residues long: SHC SH2 domain-binding protein 1 homolog A (699 aa).

PbH1 repeat units lie at residues 480 to 502 (SAEL…EIYP), 503 to 524 (GSKC…LIKD), and 532 to 554 (IPKI…VLVK). Residues 603 to 627 (AVEHTNNLEKDQGNLAIAKEEVECE) adopt a coiled-coil conformation.

Its subcellular location is the midbody. It localises to the cytoplasm. The protein localises to the cytoskeleton. It is found in the spindle. In terms of biological role, may play a role in signaling pathways governing cellular proliferation. The protein is SHC SH2 domain-binding protein 1 homolog A (shcbp1-a) of Xenopus laevis (African clawed frog).